A 546-amino-acid polypeptide reads, in one-letter code: Protein FAM124A (546 aa).

3 disordered regions span residues 1 to 37 (MDPK…SELS), 285 to 361 (KFPK…QRSK), and 488 to 546 (SSSS…EFYI). The segment covering 24–36 (SDYSHLSSTSSEL) has biased composition (low complexity). Residues 285-302 (KFPKPGRVHHSSEKKRHS) are compositionally biased toward basic residues. Polar residues-rich tracts occupy residues 304–324 (PLPS…SPLN) and 347–361 (ANST…QRSK). Residues 488-511 (SSSSATARAAPPAPSTSTLTDSSP) show a composition bias toward low complexity.

This sequence belongs to the FAM124 family.

The polypeptide is Protein FAM124A (FAM124A) (Pongo abelii (Sumatran orangutan)).